The primary structure comprises 120 residues: NAD(P)H-quinone oxidoreductase subunit 3, chloroplastic (120 aa).

Helical transmembrane passes span Y7–I27, M64–M84, and I88–L108.

The protein belongs to the complex I subunit 3 family. As to quaternary structure, NDH is composed of at least 16 different subunits, 5 of which are encoded in the nucleus.

It is found in the plastid. The protein localises to the chloroplast thylakoid membrane. The catalysed reaction is a plastoquinone + NADH + (n+1) H(+)(in) = a plastoquinol + NAD(+) + n H(+)(out). It carries out the reaction a plastoquinone + NADPH + (n+1) H(+)(in) = a plastoquinol + NADP(+) + n H(+)(out). NDH shuttles electrons from NAD(P)H:plastoquinone, via FMN and iron-sulfur (Fe-S) centers, to quinones in the photosynthetic chain and possibly in a chloroplast respiratory chain. The immediate electron acceptor for the enzyme in this species is believed to be plastoquinone. Couples the redox reaction to proton translocation, and thus conserves the redox energy in a proton gradient. The chain is NAD(P)H-quinone oxidoreductase subunit 3, chloroplastic from Cryptomeria japonica (Japanese cedar).